We begin with the raw amino-acid sequence, 56 residues long: Preprotein translocase subunit SecG (56 aa).

At 1–30 (MARKDKKTLPASGAGIVRYFNDDTAGVKLS) the chain is on the cytoplasmic side. A helical membrane pass occupies residues 31–52 (PKQVVIGTIIVALICIALRFTT). Over 53 to 56 (SVGY) the chain is Extracellular.

It belongs to the SEC61-beta family. As to quaternary structure, component of the protein translocase complex. Heterotrimer consisting of alpha (SecY), beta (SecG) and gamma (SecE) subunits. Can form oligomers of the heterotrimer.

Its subcellular location is the cell membrane. In terms of biological role, involved in protein export. The function of the beta subunit is unknown, but it may be involved in stabilization of the trimeric complex. This is Preprotein translocase subunit SecG from Methanosphaera stadtmanae (strain ATCC 43021 / DSM 3091 / JCM 11832 / MCB-3).